The primary structure comprises 184 residues: Photosystem I assembly protein Ycf4 (184 aa).

The next 2 membrane-spanning stretches (helical) occupy residues 20–40 and 64–84; these read GNFF…VVGI and IVMS…WCTI.

It belongs to the Ycf4 family.

It localises to the plastid. Its subcellular location is the chloroplast thylakoid membrane. Seems to be required for the assembly of the photosystem I complex. The protein is Photosystem I assembly protein Ycf4 of Citrus sinensis (Sweet orange).